Reading from the N-terminus, the 257-residue chain is Probable S-adenosylmethionine-dependent methyltransferase MSMEG_2350/MSMEI_2290 (257 aa).

This sequence belongs to the methyltransferase superfamily.

Functionally, probable S-adenosylmethionine-dependent methyltransferase required for the 6-O-methylation of the polysaccharide backbone of 6-O-methylglucosyl lipopolysaccharides (MGLP). The sequence is that of Probable S-adenosylmethionine-dependent methyltransferase MSMEG_2350/MSMEI_2290 from Mycolicibacterium smegmatis (strain ATCC 700084 / mc(2)155) (Mycobacterium smegmatis).